Consider the following 294-residue polypeptide: ATP synthase gamma chain (294 aa).

It belongs to the ATPase gamma chain family. As to quaternary structure, F-type ATPases have 2 components, CF(1) - the catalytic core - and CF(0) - the membrane proton channel. CF(1) has five subunits: alpha(3), beta(3), gamma(1), delta(1), epsilon(1). CF(0) has three main subunits: a, b and c.

The protein localises to the cell inner membrane. Its function is as follows. Produces ATP from ADP in the presence of a proton gradient across the membrane. The gamma chain is believed to be important in regulating ATPase activity and the flow of protons through the CF(0) complex. In Rhizobium leguminosarum bv. trifolii (strain WSM2304), this protein is ATP synthase gamma chain.